Here is a 298-residue protein sequence, read N- to C-terminus: D-alanine--D-alanine ligase (298 aa).

An ATP-grasp domain is found at phenylalanine 97 to lysine 290. Residue proline 124–threonine 173 participates in ATP binding. Residues aspartate 245, glutamate 257, and asparagine 259 each contribute to the Mg(2+) site.

The protein belongs to the D-alanine--D-alanine ligase family. Requires Mg(2+) as cofactor. Mn(2+) serves as cofactor.

It localises to the cytoplasm. The enzyme catalyses 2 D-alanine + ATP = D-alanyl-D-alanine + ADP + phosphate + H(+). It functions in the pathway cell wall biogenesis; peptidoglycan biosynthesis. Functionally, cell wall formation. This Petrotoga mobilis (strain DSM 10674 / SJ95) protein is D-alanine--D-alanine ligase.